The primary structure comprises 192 residues: Pyruvate synthase subunit PorC (192 aa).

Heterotetramer of one alpha, one beta, one delta and one gamma chain.

It catalyses the reaction 2 oxidized [2Fe-2S]-[ferredoxin] + pyruvate + CoA = 2 reduced [2Fe-2S]-[ferredoxin] + acetyl-CoA + CO2 + H(+). This chain is Pyruvate synthase subunit PorC (porC), found in Thermotoga maritima (strain ATCC 43589 / DSM 3109 / JCM 10099 / NBRC 100826 / MSB8).